The chain runs to 153 residues: UPF0756 membrane protein Pjdr2_2290 (153 aa).

5 helical membrane-spanning segments follow: residues leucine 6–alanine 26, leucine 50–valine 70, leucine 75–alanine 95, methionine 111–valine 131, and glycine 132–glycine 152.

It belongs to the UPF0756 family.

The protein localises to the cell membrane. In Paenibacillus sp. (strain JDR-2), this protein is UPF0756 membrane protein Pjdr2_2290.